A 130-amino-acid chain; its full sequence is Methylglyoxal synthase (130 aa).

Residues Met1–Cys130 enclose the MGS-like domain. Residues His11, Lys15, Thr37–Thr40, and Ser57–Gly58 each bind substrate. Catalysis depends on Asp63, which acts as the Proton donor/acceptor. His90 is a substrate binding site.

Belongs to the methylglyoxal synthase family.

The enzyme catalyses dihydroxyacetone phosphate = methylglyoxal + phosphate. In terms of biological role, catalyzes the formation of methylglyoxal from dihydroxyacetone phosphate. The polypeptide is Methylglyoxal synthase (Burkholderia orbicola (strain AU 1054)).